Here is a 261-residue protein sequence, read N- to C-terminus: Kallikrein 1-related peptidase b26 (261 aa).

A signal peptide spans 1-18; the sequence is MWFLILFPALSLGGIDAA. The propeptide at 19–24 is activation peptide; sequence PPLQSR. The 234-residue stretch at 25-258 folds into the Peptidase S1 domain; that stretch reads VVGGFNCEKN…FNSWIKDTMM (234 aa). Cystine bridges form between cysteine 31–cysteine 173, cysteine 50–cysteine 66, cysteine 152–cysteine 219, cysteine 184–cysteine 198, and cysteine 209–cysteine 234. Histidine 65 acts as the Charge relay system in catalysis. N-linked (GlcNAc...) asparagine glycosylation is present at asparagine 102. Aspartate 120 functions as the Charge relay system in the catalytic mechanism. The active-site Charge relay system is the serine 213.

This sequence belongs to the peptidase S1 family. Kallikrein subfamily.

It carries out the reaction Preferential cleavage of Arg-|-Xaa bonds in small molecule substrates. Highly selective action to release kallidin (lysyl-bradykinin) from kininogen involves hydrolysis of Met-|-Xaa or Leu-|-Xaa.. In terms of biological role, glandular kallikreins cleave Met-Lys and Arg-Ser bonds in kininogen to release Lys-bradykinin. Functionally, prorenin-converting enzyme cleaves mouse REN-2 prorenin at a dibasic site to yield mature renin. In Mus musculus (Mouse), this protein is Kallikrein 1-related peptidase b26 (Klk1b26).